The primary structure comprises 273 residues: Petrobactin import ATP-binding protein FpuD (273 aa).

One can recognise an ABC transporter domain in the interval 5-241 (LETKRLTLSY…KLVRDVFRME (237 aa)). 37–44 (GSNGCGKS) contributes to the ATP binding site.

Belongs to the ABC transporter superfamily. As to quaternary structure, the complex is composed of two ATP-binding proteins (FpuD), two transmembrane proteins (FpuB) and a solute-binding protein (FpuA).

The protein localises to the cell membrane. It catalyses the reaction a Fe(III)-siderophore(out) + ATP + H2O = a Fe(III)-siderophore(in) + ADP + phosphate + H(+). Its function is as follows. Part of an ABC transporter complex involved in ferric-petrobactin uptake. Probably responsible for energy coupling to the transport system. This is Petrobactin import ATP-binding protein FpuD from Bacillus anthracis.